The chain runs to 818 residues: MEEKDESEQSISAGRQEIRKRRRPSQPMVDKSQQTEVTEKKKQLSIPQSSGPKAALSIGNIPGSKLNYECHRVSSQLQQTWIKRKRVQDMADKSLQTETIAEEKKEEIKLVCEAVVPEEKPAAVEVGPEFPESVREVEVPPNRYSVQVKIDRSQQTTCTGDWTMMNFPQKEKLDKEQQTYFSESEIVVIGWPTNSFSKSKEGAQKRKSSGNIFLSEHPEFQPTTSSNEEIRRPSISRTVSISPTKKDSPVPLEDEKDVPVEVQPPAAEEISAEEQLPLAETTSEEVPVAVQPPPAEEPPLEAQPSPTEEAPGDEAPAKVEPTPAEEALSEKPPAEEALVEIQPSPVEEAAGDEAPAKVEATSSEETLLKEPLTEVQPPAAEEAPIQDTPELQLSPAVEAPAEEAPAEAEPPPAEEAPAEEAPEVQSPPAEEAPAEEPPEIQSPPAEEAPAEEPPEVQSPPAEEAPAEEAPEVQSPPAEEAPAEEPPEVQSPPAEEVPAGEPPEVQSPPAEEAPAEEAPEVQSPPAEEVPAEEALAEVEPPPAEEAPAGEPSEVQSPPAEEAPAEEAPEVQSPPSEEAPAEEAPEVQSVPAGQAPAEEPLEVQPPPAEDATEEEASEVQSLPTDEAPAEEGLGFQSPPADKAPEEEAPEVQSPPAEEAPAEEPPEVQSLPADEAPAEEATEEVQSPPTEESPAEEAPAELQPPSTEETTSEMVSVEKQPSLTEEPFITPISLEETSAEVLLPPFEQTPADEALVENVSPVDQAPKEADVLVEKLESGNLDDKPKSEEPLERDTIPKDSSGTKNEGVSFEIKGVIHIELE.

Positions Met-1 to Ile-61 are disordered. A phosphoserine mark is found at Ser-25, Ser-57, and Ser-182. Disordered stretches follow at residues Ser-195–Thr-727 and Leu-773–Val-805. Low complexity-rich tracts occupy residues Ser-490–Glu-511, Glu-544–Glu-560, and Ala-697–Glu-715. Basic and acidic residues predominate over residues Leu-773 to Pro-794.

As to quaternary structure, interacts with CABYR. Interacts with ROPN1 and ROPN1L; the interaction increases upon spermatozoa capacitation conditions. Post-translationally, phosphorylated by PKA upon spermatozoa capacitation conditions.

Its subcellular location is the cell projection. The protein resides in the cilium. It localises to the flagellum. Functionally, may be involved in the later stages of fibrous sheath biogenesis and spermatozoa capacitation. Inhibits ROPN1 and ROPN1L SUMOylation. Binds calcium. The protein is Fibrous sheath CABYR-binding protein of Bos taurus (Bovine).